Consider the following 263-residue polypeptide: Imidazole glycerol phosphate synthase subunit HisF (263 aa).

Catalysis depends on residues Asp11 and Asp131.

Belongs to the HisA/HisF family. Heterodimer of HisH and HisF.

The protein resides in the cytoplasm. The catalysed reaction is 5-[(5-phospho-1-deoxy-D-ribulos-1-ylimino)methylamino]-1-(5-phospho-beta-D-ribosyl)imidazole-4-carboxamide + L-glutamine = D-erythro-1-(imidazol-4-yl)glycerol 3-phosphate + 5-amino-1-(5-phospho-beta-D-ribosyl)imidazole-4-carboxamide + L-glutamate + H(+). The protein operates within amino-acid biosynthesis; L-histidine biosynthesis; L-histidine from 5-phospho-alpha-D-ribose 1-diphosphate: step 5/9. In terms of biological role, IGPS catalyzes the conversion of PRFAR and glutamine to IGP, AICAR and glutamate. The HisF subunit catalyzes the cyclization activity that produces IGP and AICAR from PRFAR using the ammonia provided by the HisH subunit. The polypeptide is Imidazole glycerol phosphate synthase subunit HisF (Deinococcus geothermalis (strain DSM 11300 / CIP 105573 / AG-3a)).